A 325-amino-acid polypeptide reads, in one-letter code: MIARIWSGESPLWRLLLPLSWLYGLVSGAIRLSYKLGFKRAWRAPVPVVVVGNLTAGGNGKTPVVIWLVEKLQQRGVRVGVVSRGYGGKAAAYPLLLTPETTTAEAGDEPVLIYQRTGAPVAVAPERAAAVKAILAAHNVQIIITDDGLQHYRLARDIEIVVIDGVRRFGNGWWLPAGPMRERASRLKTVDAAIVNGGVARAGEIPMQLAPGLAVNLRTGARCDVAQLSNIVAMAGIGHPPRFFATLEACGAHPQKCVPLADHQTLAPADVQALVGEGQTLVMTEKDAVKCRAFAEDNWWFLPVDARLSGEQPDKLLQHITSLVR.

55–62 (TAGGNGKT) is an ATP binding site.

Belongs to the LpxK family.

The catalysed reaction is a lipid A disaccharide + ATP = a lipid IVA + ADP + H(+). Its pathway is glycolipid biosynthesis; lipid IV(A) biosynthesis; lipid IV(A) from (3R)-3-hydroxytetradecanoyl-[acyl-carrier-protein] and UDP-N-acetyl-alpha-D-glucosamine: step 6/6. Transfers the gamma-phosphate of ATP to the 4'-position of a tetraacyldisaccharide 1-phosphate intermediate (termed DS-1-P) to form tetraacyldisaccharide 1,4'-bis-phosphate (lipid IVA). In Salmonella paratyphi B (strain ATCC BAA-1250 / SPB7), this protein is Tetraacyldisaccharide 4'-kinase.